Consider the following 230-residue polypeptide: Dephospho-CoA kinase (230 aa).

Residues 1–20 (MSKYAAIPSPYSHQPQAPDH) are disordered. In terms of domain architecture, DPCK spans 26–225 (VVGLTGGIGS…QDYLKLAQQL (200 aa)). 34–39 (GSGKSA) serves as a coordination point for ATP.

It belongs to the CoaE family.

It is found in the cytoplasm. It catalyses the reaction 3'-dephospho-CoA + ATP = ADP + CoA + H(+). It participates in cofactor biosynthesis; coenzyme A biosynthesis; CoA from (R)-pantothenate: step 5/5. Catalyzes the phosphorylation of the 3'-hydroxyl group of dephosphocoenzyme A to form coenzyme A. This chain is Dephospho-CoA kinase, found in Psychrobacter arcticus (strain DSM 17307 / VKM B-2377 / 273-4).